Here is a 634-residue protein sequence, read N- to C-terminus: Lamin tail domain-containing protein 2 (634 aa).

The disordered stretch occupies residues 1-44 (MRWLRPAGRRREQESVSGHLGPPAGAPAAPETPTCLPDTTPHPA). Residues 106–169 (SHSQEKLLQN…QKSCLLQLAR (64 aa)) are a coiled coil. The segment covering 228-237 (FTNMEPSSKQ) has biased composition (polar residues). Disordered stretches follow at residues 228-349 (FTNM…TDPD) and 464-575 (HRIP…PAEA). Residues 276 to 287 (SSSGGADSDSSS) show a composition bias toward low complexity. Polar residues predominate over residues 310–321 (SEQALVQAGSYS). Over residues 322–337 (RDSEDLQKTHSPRHGE) the composition is skewed to basic and acidic residues. The LTD domain occupies 350–468 (HWSPELLQSP…EVLSEHRIPR (119 aa)). A compositionally biased stretch (basic residues) spans 502-513 (PPRPPRPLRKGR). Positions 540 to 550 (HAREGPARPEN) are enriched in basic and acidic residues.

The polypeptide is Lamin tail domain-containing protein 2 (LMNTD2) (Homo sapiens (Human)).